A 306-amino-acid chain; its full sequence is Non-specific ribonucleoside hydrolase RihC (306 aa).

His-235 is a catalytic residue.

Belongs to the IUNH family. RihC subfamily.

Hydrolyzes both purine and pyrimidine ribonucleosides with a broad-substrate specificity. This Salmonella paratyphi B (strain ATCC BAA-1250 / SPB7) protein is Non-specific ribonucleoside hydrolase RihC.